The following is a 140-amino-acid chain: Putative esterase SSO2140 (140 aa).

The protein belongs to the thioesterase PaaI family.

This Saccharolobus solfataricus (strain ATCC 35092 / DSM 1617 / JCM 11322 / P2) (Sulfolobus solfataricus) protein is Putative esterase SSO2140.